The sequence spans 874 residues: Translation initiation factor IF-2 (874 aa).

The segment at 1–262 (MEDKNKTIKE…EKSTSDRDFS (262 aa)) is disordered. Pro residues predominate over residues 54-63 (SKPPVMPLPL). A compositionally biased stretch (basic and acidic residues) spans 83–104 (AKREESPGKQDAGRPPRDKDTR). A compositionally biased stretch (gly residues) spans 141 to 222 (SGGGYQGNRG…NRGPRSGGTG (82 aa)). The segment covering 235–244 (LSQSRGSSVT) has biased composition (polar residues). A compositionally biased stretch (basic and acidic residues) spans 250 to 262 (HDKEKSTSDRDFS). The 170-residue stretch at 369–538 (NRPPVVTIMG…LLQAEVMDLK (170 aa)) folds into the tr-type G domain. Residues 378–385 (GHVDHGKT) are G1. GTP is bound at residue 378 to 385 (GHVDHGKT). Residues 403–407 (GITQH) form a G2 region. Positions 424–427 (DTPG) are G3. Residues 424–428 (DTPGH) and 478–481 (NKID) contribute to the GTP site. The segment at 478-481 (NKID) is G4. The G5 stretch occupies residues 514 to 516 (SAR).

This sequence belongs to the TRAFAC class translation factor GTPase superfamily. Classic translation factor GTPase family. IF-2 subfamily.

It localises to the cytoplasm. Its function is as follows. One of the essential components for the initiation of protein synthesis. Protects formylmethionyl-tRNA from spontaneous hydrolysis and promotes its binding to the 30S ribosomal subunits. Also involved in the hydrolysis of GTP during the formation of the 70S ribosomal complex. The chain is Translation initiation factor IF-2 from Leptospira interrogans serogroup Icterohaemorrhagiae serovar copenhageni (strain Fiocruz L1-130).